A 372-amino-acid polypeptide reads, in one-letter code: Saccharopine dehydrogenase [NAD(+), L-lysine-forming] (372 aa).

L-saccharopine-binding residues include R17 and K76. The Proton acceptor role is filled by K76. Catalysis depends on H95, which acts as the Proton donor. Q100 contacts L-saccharopine. R129 serves as a coordination point for NAD(+). Residues R130 and F134 each contribute to the L-saccharopine site. Residues 202-203 (GR), D226, T230, Y250, and V277 each bind NAD(+). A disulfide bond links C204 and C248. 278–280 (SAD) serves as a coordination point for L-saccharopine. Residue 317-320 (IDHL) coordinates NAD(+). Positions 370–372 (SKL) match the Microbody targeting signal motif.

The protein belongs to the AlaDH/PNT family. Monomer.

The protein localises to the peroxisome. It catalyses the reaction L-saccharopine + NAD(+) + H2O = L-lysine + 2-oxoglutarate + NADH + H(+). The protein operates within amino-acid biosynthesis; L-lysine biosynthesis via AAA pathway; L-lysine from L-alpha-aminoadipate (fungal route): step 3/3. Functionally, catalyzes the NAD(+)-dependent cleavage of saccharopine to L-lysine and 2-oxoglutarate, the final step in the alpha-aminoadipate (AAA) pathway for lysin biosynthesis. This is Saccharopine dehydrogenase [NAD(+), L-lysine-forming] (LYS1) from Candida glabrata (strain ATCC 2001 / BCRC 20586 / JCM 3761 / NBRC 0622 / NRRL Y-65 / CBS 138) (Yeast).